The following is a 302-amino-acid chain: NAD kinase (302 aa).

D79 (proton acceptor) is an active-site residue. Residues 79–80 (DG), 153–154 (ND), R181, D183, 194–199 (TAYALS), A218, and Q252 each bind NAD(+).

The protein belongs to the NAD kinase family. A divalent metal cation is required as a cofactor.

Its subcellular location is the cytoplasm. The enzyme catalyses NAD(+) + ATP = ADP + NADP(+) + H(+). Involved in the regulation of the intracellular balance of NAD and NADP, and is a key enzyme in the biosynthesis of NADP. Catalyzes specifically the phosphorylation on 2'-hydroxyl of the adenosine moiety of NAD to yield NADP. The chain is NAD kinase from Ralstonia nicotianae (strain ATCC BAA-1114 / GMI1000) (Ralstonia solanacearum).